Consider the following 95-residue polypeptide: Integration host factor subunit beta (95 aa).

Belongs to the bacterial histone-like protein family. In terms of assembly, heterodimer of an alpha and a beta chain.

This protein is one of the two subunits of integration host factor, a specific DNA-binding protein that functions in genetic recombination as well as in transcriptional and translational control. The chain is Integration host factor subunit beta from Shewanella sp. (strain ANA-3).